The primary structure comprises 336 residues: Tyrosine phosphatase-like protein H1 (336 aa).

Residues 27 to 295 (IKKEHHKLMK…EICYRVLCEA (269 aa)) enclose the Tyrosine-protein phosphatase domain.

It belongs to the protein-tyrosine phosphatase family.

This chain is Tyrosine phosphatase-like protein H1 (H1), found in Microplitis demolitor (Parasitoid wasp).